The primary structure comprises 226 residues: Cytidylate kinase (226 aa).

10–18 (GPASSGKST) serves as a coordination point for ATP.

The protein belongs to the cytidylate kinase family. Type 1 subfamily.

Its subcellular location is the cytoplasm. The catalysed reaction is CMP + ATP = CDP + ADP. It carries out the reaction dCMP + ATP = dCDP + ADP. In Streptococcus pyogenes serotype M4 (strain MGAS10750), this protein is Cytidylate kinase.